Consider the following 538-residue polypeptide: Spindle pole body protein CSA6 (538 aa).

Disordered regions lie at residues 1–31 (MEDS…TSDL) and 57–129 (QNIS…KYQD). 2 stretches are compositionally biased toward basic and acidic residues: residues 18–30 (PEIK…KTSD) and 57–68 (QNISDSEHDLTP). 2 stretches are compositionally biased toward polar residues: residues 86-96 (KFSSSIPQKPT) and 104-122 (TSPT…SGPN). The stretch at 144–237 (KQEQNLKLEN…RNERDELVKD (94 aa)) forms a coiled coil. Positions 304 to 323 (KKISEPSAAVEKDTTSEDKT) are enriched in basic and acidic residues. Disordered regions lie at residues 304–338 (KKIS…TPRM) and 355–458 (SSNN…STKY). Composition is skewed to polar residues over residues 355–392 (SSNN…SAAY) and 407–425 (TNFY…QSSQ). Over residues 426 to 444 (SDERPETFELPHVAKDHWL) the composition is skewed to basic and acidic residues. The span at 446–457 (RPTSERSTQSTK) shows a compositional bias: polar residues.

It localises to the cytoplasm. The protein resides in the cytoskeleton. It is found in the microtubule organizing center. Its subcellular location is the spindle pole body. In terms of biological role, plays a role in mitotic spindle pole body organization, possibly at the point of spindle pole body separation. Required for mitotic exit. In Candida albicans (strain SC5314 / ATCC MYA-2876) (Yeast), this protein is Spindle pole body protein CSA6.